A 419-amino-acid chain; its full sequence is Peptide chain release factor subunit 1 (419 aa).

The protein belongs to the eukaryotic release factor 1 family. As to quaternary structure, heterodimer of two subunits, one of which binds GTP.

Its subcellular location is the cytoplasm. Its function is as follows. Directs the termination of nascent peptide synthesis (translation) in response to the termination codons UAA, UAG and UGA. This chain is Peptide chain release factor subunit 1, found in Methanococcus maripaludis (strain DSM 14266 / JCM 13030 / NBRC 101832 / S2 / LL).